We begin with the raw amino-acid sequence, 414 residues long: Glucose-1-phosphate adenylyltransferase (414 aa).

Alpha-D-glucose 1-phosphate contacts are provided by residues Y103, G168, 183–184, and S201; that span reads EK.

This sequence belongs to the bacterial/plant glucose-1-phosphate adenylyltransferase family. Homotetramer.

The catalysed reaction is alpha-D-glucose 1-phosphate + ATP + H(+) = ADP-alpha-D-glucose + diphosphate. It functions in the pathway glycan biosynthesis; glycogen biosynthesis. Involved in the biosynthesis of ADP-glucose, a building block required for the elongation reactions to produce glycogen. Catalyzes the reaction between ATP and alpha-D-glucose 1-phosphate (G1P) to produce pyrophosphate and ADP-Glc. This Thermus thermophilus (strain ATCC 27634 / DSM 579 / HB8) protein is Glucose-1-phosphate adenylyltransferase.